Here is a 450-residue protein sequence, read N- to C-terminus: Phosphoglucosamine mutase (450 aa).

The active-site Phosphoserine intermediate is the S101. The Mg(2+) site is built by S101, D240, D242, and D244. S101 bears the Phosphoserine mark.

This sequence belongs to the phosphohexose mutase family. Mg(2+) serves as cofactor. Activated by phosphorylation.

The catalysed reaction is alpha-D-glucosamine 1-phosphate = D-glucosamine 6-phosphate. Functionally, catalyzes the conversion of glucosamine-6-phosphate to glucosamine-1-phosphate. This Streptococcus thermophilus (strain ATCC BAA-250 / LMG 18311) protein is Phosphoglucosamine mutase.